We begin with the raw amino-acid sequence, 474 residues long: Cysteine--tRNA ligase (474 aa).

A Zn(2+)-binding site is contributed by Cys27. The 'HIGH' region motif lies at 29 to 39; the sequence is ITPYDHMHVGH. 3 residues coordinate Zn(2+): Cys213, His238, and Glu242. Residues 271–275 carry the 'KMSKS' region motif; sequence KMSKS. An ATP-binding site is contributed by Lys274.

This sequence belongs to the class-I aminoacyl-tRNA synthetase family. The cofactor is Zn(2+).

It is found in the cytoplasm. The enzyme catalyses tRNA(Cys) + L-cysteine + ATP = L-cysteinyl-tRNA(Cys) + AMP + diphosphate. This Pyrobaculum neutrophilum (strain DSM 2338 / JCM 9278 / NBRC 100436 / V24Sta) (Thermoproteus neutrophilus) protein is Cysteine--tRNA ligase.